The sequence spans 713 residues: Zinc finger and BTB domain-containing protein 1 (713 aa).

Lysine 3 participates in a covalent cross-link: Glycyl lysine isopeptide (Lys-Gly) (interchain with G-Cter in SUMO2). In terms of domain architecture, BTB spans 24–91 (CDCCIAIDDI…MYLGKIMTAP (68 aa)). Glycyl lysine isopeptide (Lys-Gly) (interchain with G-Cter in SUMO2) cross-links involve residues lysine 200 and lysine 205. The C2H2-type 1; atypical zinc-finger motif lies at 216–242 (FTCDSCGFGFSCEKLLDEHVLTCTNRH). Residues lysine 261, lysine 266, lysine 276, lysine 284, lysine 304, lysine 316, lysine 328, lysine 340, and lysine 346 each participate in a glycyl lysine isopeptide (Lys-Gly) (interchain with G-Cter in SUMO2) cross-link. A disordered region spans residues 270 to 319 (AEKDSSKTFSAQPDKYREDANQAPDDSASTTGSRKSTVEAGIAGEEKSRA). At serine 355 the chain carries Phosphoserine. At threonine 356 the chain carries Phosphothreonine. Lysine 381 is covalently cross-linked (Glycyl lysine isopeptide (Lys-Gly) (interchain with G-Cter in SUMO2)). Residues 448 to 470 (CACGKCGQILVKGRQLQEHAQRC) form a C2H2-type 2; atypical zinc finger. Residue lysine 528 forms a Glycyl lysine isopeptide (Lys-Gly) (interchain with G-Cter in SUMO2) linkage. Residues 533–558 (PFRCPNCGQRFETENLVVEHMSSCLD) form a UBZ-type zinc finger. Lysine 563 is covalently cross-linked (Glycyl lysine isopeptide (Lys-Gly) (interchain with G-Cter in SUMO2)). 5 consecutive C2H2-type zinc fingers follow at residues 578-600 (HFCNLCGKGFYQRCHLREHYTVH), 606-628 (FVCQTCGKQFLRERQLRLHNDMH), 634-656 (YVCSICDQGNFRKHDHVRHMISH), 662-684 (TICQVCFQIFPNNEQLEQHMDVH), and 686-709 (YTCGICGAKFNLRKDMRSHYNAKH).

As to quaternary structure, homodimer. Homodimer. Interacts (via BTB domain) with TRIM28 (unphosphorylated or phosphorylated form). In terms of processing, sumoylated with SUMO2 at Lys-328 and to a lesser extent at Lys-266. Sumoylation inhibits its transcriptional repression activity and regulates its subcellular localization. In terms of tissue distribution, expressed strongly in thymus and spleen, less in lymph nodes and peripheral blood mononuclear cells (PBMCs) and weakly in bone marrow. Strongly expressed in immature, but weakly in mature bone marrow-lymphocyte B.

Its subcellular location is the nucleus. It is found in the nucleoplasm. Its function is as follows. Acts as a transcriptional repressor. Represses cAMP-responsive element (CRE)-mediated transcriptional activation. In addition, has a role in translesion DNA synthesis. Requires for UV-inducible RAD18 loading, PCNA monoubiquitination, POLH recruitment to replication factories and efficient translesion DNA synthesis. Plays a key role in the transcriptional regulation of T lymphocyte development. In Mus musculus (Mouse), this protein is Zinc finger and BTB domain-containing protein 1 (Zbtb1).